The following is a 204-amino-acid chain: Proteasome subunit beta type-3-A (204 aa).

The protein belongs to the peptidase T1B family. As to quaternary structure, component of the 20S core complex of the 26S proteasome. The 26S proteasome is composed of a core protease (CP), known as the 20S proteasome, capped at one or both ends by the 19S regulatory particle (RP/PA700). The 20S proteasome core is composed of 28 subunits that are arranged in four stacked rings, resulting in a barrel-shaped structure. The two end rings are each formed by seven alpha subunits, and the two central rings are each formed by seven beta subunits. The catalytic chamber with the active sites is on the inside of the barrel.

The protein resides in the cytoplasm. Its subcellular location is the nucleus. Its function is as follows. Non-catalytic component of the proteasome, a multicatalytic proteinase complex which is characterized by its ability to cleave peptides with Arg, Phe, Tyr, Leu, and Glu adjacent to the leaving group at neutral or slightly basic pH. The proteasome has an ATP-dependent proteolytic activity. In Arabidopsis thaliana (Mouse-ear cress), this protein is Proteasome subunit beta type-3-A (PBC1).